A 175-amino-acid chain; its full sequence is Peptide methionine sulfoxide reductase MsrA (175 aa).

The active site involves Cys12.

Belongs to the MsrA Met sulfoxide reductase family.

It catalyses the reaction L-methionyl-[protein] + [thioredoxin]-disulfide + H2O = L-methionyl-(S)-S-oxide-[protein] + [thioredoxin]-dithiol. The catalysed reaction is [thioredoxin]-disulfide + L-methionine + H2O = L-methionine (S)-S-oxide + [thioredoxin]-dithiol. Functionally, has an important function as a repair enzyme for proteins that have been inactivated by oxidation. Catalyzes the reversible oxidation-reduction of methionine sulfoxide in proteins to methionine. In Limosilactobacillus reuteri (strain DSM 20016) (Lactobacillus reuteri), this protein is Peptide methionine sulfoxide reductase MsrA.